A 336-amino-acid chain; its full sequence is Putative bifunctional cytochrome c-type biogenesis protein CcmAE (336 aa).

Residues 1-199 are cytochrome c biogenesis ATP-binding export protein CcmA 2; that stretch reads MLEARDLYCE…ADTVRRLALT (199 aa). The region spanning 2–242 is the ABC transporter domain; sequence LEARDLYCER…VGQRLRVGGM (241 aa). Residue 34-41 coordinates ATP; it reads GGNGAGKT. Residues 196 to 336 form a cytochrome c-type biogenesis protein CcmE 2 region; sequence LALTTALVLY…PQRVDKDTSS (141 aa). Heme-binding residues include H307 and Y311. The interval 307 to 336 is disordered; the sequence is HDENYTPPEVEKAMQENHRRPQRVDKDTSS.

It in the N-terminal section; belongs to the ABC transporter superfamily. CcmA exporter (TC 3.A.1.107) family. In the C-terminal section; belongs to the CcmE/CycJ family.

Its subcellular location is the cell inner membrane. It catalyses the reaction heme b(in) + ATP + H2O = heme b(out) + ADP + phosphate + H(+). Part of the ABC transporter complex CcmAB involved in the biogenesis of c-type cytochromes; once thought to export heme, this seems not to be the case, but its exact role is uncertain. Responsible for energy coupling to the transport system. In terms of biological role, heme chaperone required for the biogenesis of c-type cytochromes. Transiently binds heme delivered by CcmC and transfers the heme to apo-cytochromes in a process facilitated by CcmF and CcmH. The sequence is that of Putative bifunctional cytochrome c-type biogenesis protein CcmAE (ccmAE) from Salmonella choleraesuis (strain SC-B67).